The primary structure comprises 310 residues: MLDANKLQQAVDQAYTQFHSLNGGQNADYIPFLANVPGQLAAVAIVTSDGNVYSAGDSDYRFALESISKVCTLALALEDVGPQAVQDKVGADPTGLPFNSVIALELHGGKPLSPLVNAGAIATTSLINAENTEQRWQRILHIQQQLAGEQVALSDEVNQSEQTTNFHNRAIAWLLYSAGYLYCDAMEACDVYTRQCSTLINTIELATLGATLAAGGVNPLTHKRVLQANNVPYILAEMMMEGLYGRSGDWAYRVGLPGKSGVGGGILAVVPGVMGIAAFSPPLDEEGNSVRGQKMVASVAKQLGYNVFKG.

Substrate is bound by residues serine 66, asparagine 117, glutamate 161, asparagine 168, tyrosine 192, tyrosine 244, and valine 262. An N6-acetyllysine modification is found at lysine 294.

Belongs to the glutaminase family. Homotetramer.

It catalyses the reaction L-glutamine + H2O = L-glutamate + NH4(+). This Escherichia coli O81 (strain ED1a) protein is Glutaminase.